The primary structure comprises 288 residues: Ribosomal RNA small subunit methyltransferase A (288 aa).

S-adenosyl-L-methionine contacts are provided by asparagine 18, leucine 20, glycine 45, glutamate 66, aspartate 91, and asparagine 118.

It belongs to the class I-like SAM-binding methyltransferase superfamily. rRNA adenine N(6)-methyltransferase family. RsmA subfamily.

The protein resides in the cytoplasm. The catalysed reaction is adenosine(1518)/adenosine(1519) in 16S rRNA + 4 S-adenosyl-L-methionine = N(6)-dimethyladenosine(1518)/N(6)-dimethyladenosine(1519) in 16S rRNA + 4 S-adenosyl-L-homocysteine + 4 H(+). Specifically dimethylates two adjacent adenosines (A1518 and A1519) in the loop of a conserved hairpin near the 3'-end of 16S rRNA in the 30S particle. May play a critical role in biogenesis of 30S subunits. In Mannheimia succiniciproducens (strain KCTC 0769BP / MBEL55E), this protein is Ribosomal RNA small subunit methyltransferase A.